Here is a 241-residue protein sequence, read N- to C-terminus: Zinc finger CCHC domain-containing protein 24 (241 aa).

Serine 65 and serine 93 each carry phosphoserine. The segment at 132–149 (YLCHLCFNKGHYIKDCPQ) adopts a CCHC-type zinc-finger fold.

This is Zinc finger CCHC domain-containing protein 24 (ZCCHC24) from Homo sapiens (Human).